A 164-amino-acid chain; its full sequence is Phospholipase A and acyltransferase 4 (164 aa).

The tract at residues 1–40 (MASPHQEPKPGDLIEIFRLGYEHWALYIGDGYVIHLAPPS) is essential for its ability regulate keratinocyte differentiation. At 1–134 (MASPHQEPKP…SRCKQVEKAK (134 aa)) the chain is on the cytoplasmic side. The region spanning 13-129 (LIEIFRLGYE…LRYGKSRCKQ (117 aa)) is the LRAT domain. Catalysis depends on residues His23 and His35. The active-site Acyl-thioester intermediate is the Cys113. Residues 124-164 (KSRCKQVEKAKVEVGVATALGILVVAGCSFAIRRYQKKATA) are interaction with TGM1. Residues 135–155 (VEVGVATALGILVVAGCSFAI) form a helical membrane-spanning segment. The Lumenal portion of the chain corresponds to 156-164 (RRYQKKATA).

Belongs to the H-rev107 family. Interacts with TGM1. In terms of tissue distribution, widely expressed.

The protein localises to the membrane. It catalyses the reaction a 1,2-diacyl-sn-glycero-3-phosphocholine + H2O = a 1-acyl-sn-glycero-3-phosphocholine + a fatty acid + H(+). The catalysed reaction is a 1,2-diacyl-sn-glycero-3-phosphocholine + H2O = a 2-acyl-sn-glycero-3-phosphocholine + a fatty acid + H(+). It carries out the reaction 1,2-dihexadecanoyl-sn-glycero-3-phosphocholine + H2O = 1-hexadecanoyl-sn-glycero-3-phosphocholine + hexadecanoate + H(+). The enzyme catalyses 1,2-dihexadecanoyl-sn-glycero-3-phosphocholine + H2O = 2-hexadecanoyl-sn-glycero-3-phosphocholine + hexadecanoate + H(+). It catalyses the reaction 1-hexadecanoyl-2-(9Z-octadecenoyl)-sn-glycero-3-phosphocholine + H2O = 2-(9Z-octadecenoyl)-sn-glycero-3-phosphocholine + hexadecanoate + H(+). The catalysed reaction is 1-hexadecanoyl-2-(9Z-octadecenoyl)-sn-glycero-3-phosphocholine + H2O = 1-hexadecanoyl-sn-glycero-3-phosphocholine + (9Z)-octadecenoate + H(+). It carries out the reaction 1-hexadecanoyl-2-(5Z,8Z,11Z,14Z-eicosatetraenoyl)-sn-glycero-3-phosphocholine + H2O = 2-(5Z,8Z,11Z,14Z)-eicosatetraenoyl-sn-glycero-3-phosphocholine + hexadecanoate + H(+). The enzyme catalyses 1-hexadecanoyl-2-(9Z,12Z-octadecadienoyl)-sn-glycero-3-phosphoethanolamine + H2O = 1-hexadecanoyl-sn-glycero-3-phosphoethanolamine + (9Z,12Z)-octadecadienoate + H(+). It catalyses the reaction 1-hexadecanoyl-2-(9Z,12Z-octadecadienoyl)-sn-glycero-3-phosphoethanolamine + H2O = 2-(9Z,12Z)-octadecadienoyl-sn-glycero-3-phosphoethanolamine + hexadecanoate + H(+). The catalysed reaction is 1-hexadecanoyl-2-(5Z,8Z,11Z,14Z-eicosatetraenoyl)-sn-glycero-3-phosphoethanolamine + H2O = 2-(5Z,8Z,11Z,14Z)-eicosatetraenoyl-sn-glycero-3-phosphoethanolamine + hexadecanoate + H(+). It carries out the reaction 1-hexanoyl-2-acyl-sn-glycero-3-phosphocholine + H2O = hexanoate + a 2-acyl-sn-glycero-3-phosphocholine + H(+). The enzyme catalyses 1,2-diheptadecanoyl-sn-glycero-3-phosphoethanolamine + 1-(9Z-octadecenoyl)-2-hexadecanoyl-sn-glycero-3-phosphocholine = 1,2-diheptadecanoyl-sn-glycero-3-phospho-N-hexadecanoyl-ethanolamine + 1-(9Z-octadecenoyl)-sn-glycero-3-phosphocholine + H(+). It catalyses the reaction 1,2-diheptadecanoyl-sn-glycero-3-phosphoethanolamine + 1-(9Z-octadecenoyl)-2-hexadecanoyl-sn-glycero-3-phosphocholine = 1,2-diheptadecanoyl-sn-glycero-3-phospho-N-(9Z-octadecenoyl)-ethanolamine + 2-hexadecanoyl-sn-glycero-3-phosphocholine + H(+). Its function is as follows. Exhibits both phospholipase A1/2 and acyltransferase activities. Shows phospholipase A1 (PLA1) and A2 (PLA2), catalyzing the calcium-independent release of fatty acids from the sn-1 or sn-2 position of glycerophospholipids. For most substrates, PLA1 activity is much higher than PLA2 activity. Shows O-acyltransferase activity, catalyzing the transfer of a fatty acyl group from glycerophospholipid to the hydroxyl group of lysophospholipid. Shows N-acyltransferase activity, catalyzing the calcium-independent transfer of a fatty acyl group at the sn-1 position of phosphatidylcholine (PC) and other glycerophospholipids to the primary amine of phosphatidylethanolamine (PE), forming N-acylphosphatidylethanolamine (NAPE), which serves as precursor for N-acylethanolamines (NAEs). Promotes keratinocyte differentiation via activation of TGM1. This is Phospholipase A and acyltransferase 4 from Homo sapiens (Human).